The chain runs to 304 residues: N-acetylmuramic acid 6-phosphate etherase (304 aa).

Residues 62 to 225 (IVQAFQNGGR…TTASMVMIGK (164 aa)) enclose the SIS domain. The Proton donor role is filled by glutamate 90. Glutamate 121 is a catalytic residue.

Belongs to the GCKR-like family. MurNAc-6-P etherase subfamily. In terms of assembly, homodimer.

The enzyme catalyses N-acetyl-D-muramate 6-phosphate + H2O = N-acetyl-D-glucosamine 6-phosphate + (R)-lactate. Its pathway is amino-sugar metabolism; 1,6-anhydro-N-acetylmuramate degradation. It participates in amino-sugar metabolism; N-acetylmuramate degradation. The protein operates within cell wall biogenesis; peptidoglycan recycling. Its function is as follows. Specifically catalyzes the cleavage of the D-lactyl ether substituent of MurNAc 6-phosphate, producing GlcNAc 6-phosphate and D-lactate. Together with AnmK, is also required for the utilization of anhydro-N-acetylmuramic acid (anhMurNAc) either imported from the medium or derived from its own cell wall murein, and thus plays a role in cell wall recycling. The protein is N-acetylmuramic acid 6-phosphate etherase of Actinobacillus pleuropneumoniae serotype 5b (strain L20).